Consider the following 366-residue polypeptide: Neutral protease 2 homolog BDBG_02110 (366 aa).

An N-terminal signal peptide occupies residues 1-19; sequence MQLSSVLLTAAGLLAPVYS. Residues 23–184 constitute a propeptide that is removed on maturation; that stretch reads ISIGRRSEGL…RAKIHDHLAQ (162 aa). Residues Asn-123 and Asn-192 are each glycosylated (N-linked (GlcNAc...) asparagine). Cys-272 and Cys-290 form a disulfide bridge. His-314 is a binding site for Zn(2+). Residue Glu-315 is part of the active site. His-318 contributes to the Zn(2+) binding site.

Belongs to the peptidase M35 family. Zn(2+) is required as a cofactor.

The protein localises to the secreted. The enzyme catalyses Preferential cleavage of bonds with hydrophobic residues in P1'. Also 3-Asn-|-Gln-4 and 8-Gly-|-Ser-9 bonds in insulin B chain.. Secreted metalloproteinase that allows assimilation of proteinaceous substrates. Shows high activities on basic nuclear substrates such as histone and protamine. The chain is Neutral protease 2 homolog BDBG_02110 from Blastomyces gilchristii (strain SLH14081) (Blastomyces dermatitidis).